A 258-amino-acid polypeptide reads, in one-letter code: Acetylglutamate kinase (258 aa).

Substrate-binding positions include 41 to 42 (GG), Arg-63, and Asn-156.

The protein belongs to the acetylglutamate kinase family. ArgB subfamily. In terms of assembly, homodimer.

Its subcellular location is the cytoplasm. The catalysed reaction is N-acetyl-L-glutamate + ATP = N-acetyl-L-glutamyl 5-phosphate + ADP. It participates in amino-acid biosynthesis; L-arginine biosynthesis; N(2)-acetyl-L-ornithine from L-glutamate: step 2/4. Functionally, catalyzes the ATP-dependent phosphorylation of N-acetyl-L-glutamate. This chain is Acetylglutamate kinase, found in Geobacillus stearothermophilus (Bacillus stearothermophilus).